We begin with the raw amino-acid sequence, 429 residues long: Serine hydroxymethyltransferase 1 (429 aa).

Residues leucine 125 and 129–131 (GHL) each bind (6S)-5,6,7,8-tetrahydrofolate. The residue at position 234 (lysine 234) is an N6-(pyridoxal phosphate)lysine.

Belongs to the SHMT family. As to quaternary structure, homodimer. Pyridoxal 5'-phosphate is required as a cofactor.

The protein resides in the cytoplasm. It carries out the reaction (6R)-5,10-methylene-5,6,7,8-tetrahydrofolate + glycine + H2O = (6S)-5,6,7,8-tetrahydrofolate + L-serine. It participates in one-carbon metabolism; tetrahydrofolate interconversion. Its pathway is amino-acid biosynthesis; glycine biosynthesis; glycine from L-serine: step 1/1. Catalyzes the reversible interconversion of serine and glycine with tetrahydrofolate (THF) serving as the one-carbon carrier. This reaction serves as the major source of one-carbon groups required for the biosynthesis of purines, thymidylate, methionine, and other important biomolecules. Also exhibits THF-independent aldolase activity toward beta-hydroxyamino acids, producing glycine and aldehydes, via a retro-aldol mechanism. This is Serine hydroxymethyltransferase 1 from Agrobacterium fabrum (strain C58 / ATCC 33970) (Agrobacterium tumefaciens (strain C58)).